A 178-amino-acid chain; its full sequence is M-phase-specific PLK1-interacting protein (178 aa).

Residues 1-15 (MHRPNFRPPTPPYPS) are compositionally biased toward pro residues. Residues 1–134 (MHRPNFRPPT…RGREKRMSNE (134 aa)) are disordered. Over residues 17 to 34 (GIGGWGGGNNFRGALGGG) the composition is skewed to gly residues. R36 carries the post-translational modification Asymmetric dimethylarginine. A phosphoserine mark is found at S39 and S46. T50 bears the Phosphothreonine mark. Position 56 is an omega-N-methylarginine (R56). R58, R67, and R76 each carry asymmetric dimethylarginine. Low complexity predominate over residues 78–96 (GSPSPGGYPGSYSRSPAGS). Phosphoserine occurs at positions 79, 81, 92, 103, and 114. Over residues 97-121 (QHQFGYSPGQQQTYPQGSPRTSTPF) the composition is skewed to polar residues. R116 carries the post-translational modification Omega-N-methylarginine. T119 is modified (phosphothreonine). Phosphoserine is present on residues S123 and S132.

Interacts with PLK1; phosphorylation-dependent. In terms of processing, phosphorylated during mitosis in the cell cycle probably by CDK1.

The protein localises to the nucleus. The protein resides in the cytoplasm. It is found in the cytoskeleton. Its subcellular location is the microtubule organizing center. It localises to the centrosome. May play a role in maintenance of cell cycle integrity by regulating mitosis or cytokinesis. The chain is M-phase-specific PLK1-interacting protein (Mplkip) from Mus musculus (Mouse).